The chain runs to 930 residues: Polypeptide N-acetylgalactosaminyltransferase 5 (930 aa).

Topologically, residues 1–12 (MNKIRKFFRGSG) are cytoplasmic. The helical; Signal-anchor for type II membrane protein transmembrane segment at 13–35 (RVLAFIFVASVIWLLFDMAALRL) threads the bilayer. Residues 36 to 930 (SFSEINTGIL…KWKFEKYYDV (895 aa)) are Lumenal-facing. The segment at 163–210 (GSEKDSFTVSRGVPLNKTAEHTETLDKKQEAPENYNLSSDTSKQASQR) is disordered. N-linked (GlcNAc...) asparagine glycosylation occurs at N178. Over residues 180–193 (TAEHTETLDKKQEA) the composition is skewed to basic and acidic residues. The segment covering 197–210 (YNLSSDTSKQASQR) has biased composition (polar residues). N-linked (GlcNAc...) asparagine glycosylation is found at N198 and N213. S285 is subject to Phosphoserine. Residues N287 and N309 are each glycosylated (N-linked (GlcNAc...) asparagine). A disordered region spans residues 344–377 (LGESQGKHIPRSQSQTLSSPLAPKRAVSQSKPTL). N-linked (GlcNAc...) asparagine glycans are attached at residues N387 and N403. 3 disulfide bridges follow: C476/C708, C699/C779, and C812/C825. The segment at 485 to 594 (LPTTSIIMCF…VGWLEPLLER (110 aa)) is catalytic subdomain A. Residues D526 and R555 each coordinate substrate. N-linked (GlcNAc...) asparagine glycosylation occurs at N568. Residue D578 participates in Mn(2+) binding. Residue S579 participates in substrate binding. H580 is a binding site for Mn(2+). The tract at residues 654-716 (IIRCPVMAGG…PCSRVGHIFR (63 aa)) is catalytic subdomain B. W685 contributes to the substrate binding site. H713 is a Mn(2+) binding site. The substrate site is built by R716 and Y721. N-linked (GlcNAc...) asparagine glycans are attached at residues N766, N817, and N835. The region spanning 794–925 (KAPVVRASGV…TEPQQKWKFE (132 aa)) is the Ricin B-type lectin domain. 2 disulfide bridges follow: C848-C863 and C898-C913. N-linked (GlcNAc...) asparagine glycosylation occurs at N902.

The protein belongs to the glycosyltransferase 2 family. GalNAc-T subfamily. In terms of assembly, interacts with EXT2. Does not interact with EXT1, EXTL1 or EXTL3. Mn(2+) is required as a cofactor. Predominantly expressed in sublingual gland. Expressed at lower level in stomach and small intestine. Weakly or not expressed in submandibular gland, parotid gland, kidney, liver, heart, brain, spleen, lung, skeletal muscle, testis, ovary, cervix and uterus.

It localises to the golgi apparatus membrane. The catalysed reaction is L-seryl-[protein] + UDP-N-acetyl-alpha-D-galactosamine = a 3-O-[N-acetyl-alpha-D-galactosaminyl]-L-seryl-[protein] + UDP + H(+). It catalyses the reaction L-threonyl-[protein] + UDP-N-acetyl-alpha-D-galactosamine = a 3-O-[N-acetyl-alpha-D-galactosaminyl]-L-threonyl-[protein] + UDP + H(+). The protein operates within protein modification; protein glycosylation. Its function is as follows. Catalyzes the initial reaction in O-linked oligosaccharide biosynthesis, the transfer of an N-acetyl-D-galactosamine residue to a serine or threonine residue on the protein receptor. Has activity toward EA2 peptide substrate, but has a weak activity toward Muc2, Muc1b, rMuc-2 or mG-Muc substrates. This Rattus norvegicus (Rat) protein is Polypeptide N-acetylgalactosaminyltransferase 5 (Galnt5).